Here is a 244-residue protein sequence, read N- to C-terminus: Orotidine 5'-phosphate decarboxylase (244 aa).

Substrate contacts are provided by residues Asp-20, Lys-42, Asp-70–Thr-79, Thr-125, Arg-186, Gln-195, Gly-215, and Arg-216. Residue Lys-72 is the Proton donor of the active site.

Belongs to the OMP decarboxylase family. Type 1 subfamily. As to quaternary structure, homodimer.

It carries out the reaction orotidine 5'-phosphate + H(+) = UMP + CO2. It functions in the pathway pyrimidine metabolism; UMP biosynthesis via de novo pathway; UMP from orotate: step 2/2. Its function is as follows. Catalyzes the decarboxylation of orotidine 5'-monophosphate (OMP) to uridine 5'-monophosphate (UMP). The protein is Orotidine 5'-phosphate decarboxylase of Xylella fastidiosa (strain M12).